Here is a 182-residue protein sequence, read N- to C-terminus: Lipoprotein signal peptidase (182 aa).

The next 4 membrane-spanning stretches (helical) occupy residues 15 to 35, 44 to 64, 65 to 85, and 97 to 117; these read LYIG…FLVI, LEVL…FVFG, AFQD…VFLI, and PWGW…KFFV. Active-site residues include Asp-140 and Asp-162. Residues 155–175 traverse the membrane as a helical segment; it reads WPAFNVADSCVTIGLTILIFT.

Belongs to the peptidase A8 family.

It localises to the cell inner membrane. The catalysed reaction is Release of signal peptides from bacterial membrane prolipoproteins. Hydrolyzes -Xaa-Yaa-Zaa-|-(S,diacylglyceryl)Cys-, in which Xaa is hydrophobic (preferably Leu), and Yaa (Ala or Ser) and Zaa (Gly or Ala) have small, neutral side chains.. It functions in the pathway protein modification; lipoprotein biosynthesis (signal peptide cleavage). Functionally, this protein specifically catalyzes the removal of signal peptides from prolipoproteins. In Leptospira borgpetersenii serovar Hardjo-bovis (strain L550), this protein is Lipoprotein signal peptidase.